An 83-amino-acid polypeptide reads, in one-letter code: UPF0729 protein CBG02799 (83 aa).

The disordered stretch occupies residues 51–83 (QEKKEEEEEKEKSCCSTEAENTTEVTTETKKDQ). Residues 67 to 76 (TEAENTTEVT) show a composition bias toward low complexity.

Belongs to the UPF0729 family.

The protein is UPF0729 protein CBG02799 of Caenorhabditis briggsae.